Consider the following 130-residue polypeptide: MAIWQGRSLRKPSGGRIILARKKRKRELGREPAFTKVAEGREKKKIIRTYGGNRKVRLIEALYANVFDGGKGKKVKVLRVVENPANRQYVRRNIITKGAIIETEIGRAIVTSRPGQHGVVNAVLIKEENA.

The protein belongs to the eukaryotic ribosomal protein eS8 family. Part of the 30S ribosomal subunit.

The protein is Small ribosomal subunit protein eS8 of Thermococcus onnurineus (strain NA1).